A 278-amino-acid polypeptide reads, in one-letter code: Type II restriction enzyme NgoPII (278 aa).

The protein belongs to the NgoPII type II restriction endonuclease family.

It carries out the reaction Endonucleolytic cleavage of DNA to give specific double-stranded fragments with terminal 5'-phosphates.. A P subtype restriction enzyme that recognizes the double-stranded sequence 5'-GGCC-3' and cleaves after G-2. The sequence is that of Type II restriction enzyme NgoPII (ngoPIIR) from Neisseria gonorrhoeae.